Reading from the N-terminus, the 918-residue chain is Interleukin-6 receptor subunit beta (918 aa).

The signal sequence occupies residues 1 to 22 (MLTLQTWLVQALFIFLTTESTG). At 23 to 619 (ELLDPCGYIS…TPKFAQGEIE (597 aa)) the chain is on the extracellular side. Positions 26–120 (DPCGYISPES…LEQNVYGITI (95 aa)) constitute an Ig-like C2-type domain. Disulfide bonds link Cys28–Cys54 and Cys48–Cys103. N-linked (GlcNAc...) asparagine glycosylation is found at Asn43, Asn83, and Asn131. Fibronectin type-III domains lie at 125–216 (PPEK…NFDP), 224–324 (PPHN…TYED), 329–424 (APSF…FQAT), 426–517 (PVMD…LKQA), and 518–613 (PPSK…TPKF). A disulfide bond links Cys134 and Cys144. N-linked (GlcNAc...) asparagine glycosylation is present at Asn157. Cys172 and Cys182 are disulfide-bonded. Residue Asn227 is glycosylated (N-linked (GlcNAc...) asparagine). The WSXWS motif motif lies at 310 to 314 (WSDWS). N-linked (GlcNAc...) asparagine glycans are attached at residues Asn379 and Asn383. Asn390 is a glycosylation site (N-linked (GlcNAc...) (complex) asparagine). Cys458 and Cys466 form a disulfide bridge. 2 N-linked (GlcNAc...) asparagine glycosylation sites follow: Asn553 and Asn564. A helical transmembrane segment spans residues 620 to 641 (AIVVPVCLAFLLTTLLGVLFCF). At 642-918 (NKRDLIKKHI…TVRQGGYMPQ (277 aa)) the chain is on the cytoplasmic side. Positions 651–659 (IWPNVPDPS) match the Box 1 motif motif. Disordered regions lie at residues 660–681 (KSHI…SKDQ) and 722–758 (EGHS…STVQ). Residues Ser661 and Ser667 each carry the phosphoserine modification. The segment covering 731–755 (SSCMSSSRPSISSSDENESSQNTSS) has biased composition (low complexity). 4 positions are modified to phosphoserine: Ser782, Ser789, Ser829, and Ser839.

This sequence belongs to the type I cytokine receptor family. Type 2 subfamily. In terms of assembly, component of a hexamer of two molecules each of IL6, IL6R and IL6ST; associates with the complex IL6:IL6R but does not interact with IL6. Forms heterodimers composed of LIFR and IL6ST (type I OSM receptor) which are activated by LIF and OSM. Also forms heterodimers composed of OSMR and IL6ST (type II receptor) which are activated by OSM but not by LIF. Component of a receptor complex composed of IL6ST/GP130, IL27RA/WSX1 and CNTFR which interacts with the neuroprotective peptide humanin. Interacts with HCK. Interacts with INPP5D/SHIP1. Interacts with SRC and YES. Interacts with ARMH4; this interaction prevents IL6ST protein homodimerization and bridges ARMH4 with IL6R and STAT3 and therefore inhibits phosphorylation of STAT3 at 'Tyr-705'. (Microbial infection) The homodimer binds two molecules of herpes virus 8/HHV-8 protein vIL-6. In terms of processing, phosphorylation of Ser-782 down-regulates cell surface expression. Heavily N-glycosylated. Glycosylation is required for protein stability and localization in plasma membrane but not for ligand binding. In terms of tissue distribution, found in all the tissues and cell lines examined. Expression not restricted to IL6 responsive cells. As to expression, expressed in blood serum (at protein level).

Its subcellular location is the cell membrane. The protein localises to the secreted. Functionally, signal-transducing molecule. The receptor systems for IL6, LIF, OSM, CNTF, IL11, CTF1 and BSF3 can utilize IL6ST for initiating signal transmission. Binding of IL6 to IL6R induces IL6ST homodimerization and formation of a high-affinity receptor complex, which activates the intracellular JAK-MAPK and JAK-STAT3 signaling pathways. That causes phosphorylation of IL6ST tyrosine residues which in turn activates STAT3. In parallel, the IL6 signaling pathway induces the expression of two cytokine receptor signaling inhibitors, SOCS1 and SOCS3, which inhibit JAK and terminate the activity of the IL6 signaling pathway as a negative feedback loop. Also activates the yes-associated protein 1 (YAP) and NOTCH pathways to control inflammation-induced epithelial regeneration, independently of STAT3. Acts as a receptor for the neuroprotective peptide humanin as part of a complex with IL27RA/WSX1 and CNTFR. Mediates signals which regulate immune response, hematopoiesis, pain control and bone metabolism. Has a role in embryonic development. Essential for survival of motor and sensory neurons and for differentiation of astrocytes. Required for expression of TRPA1 in nociceptive neurons. Required for the maintenance of PTH1R expression in the osteoblast lineage and for the stimulation of PTH-induced osteoblast differentiation. Required for normal trabecular bone mass and cortical bone composition. Its function is as follows. Binds to the soluble IL6:sIL6R complex (hyper-IL6), thereby blocking IL6 trans-signaling. Inhibits sIL6R-dependent acute phase response. Also blocks IL11 cluster signaling through IL11R. The sequence is that of Interleukin-6 receptor subunit beta from Homo sapiens (Human).